We begin with the raw amino-acid sequence, 526 residues long: Alpha-ketoglutaric semialdehyde dehydrogenase (526 aa).

Residues 159–160 (SN), 185–188 (KAHS), and 240–241 (GS) contribute to the NADP(+) site. The active-site Proton acceptor is Glu264. Cys301 (nucleophile) is an active-site residue. Glu393 provides a ligand contact to NADP(+).

The protein belongs to the aldehyde dehydrogenase family.

It carries out the reaction 2,5-dioxopentanoate + NADP(+) + H2O = 2-oxoglutarate + NADPH + 2 H(+). It participates in carbohydrate acid metabolism; D-glucarate degradation. In terms of biological role, catalyzes the NAD(P)(+)-dependent oxidation of alpha-ketoglutaric semialdehyde (alphaKGSA) to alpha-ketoglutarate in the D-glutarate degradation pathway. The polypeptide is Alpha-ketoglutaric semialdehyde dehydrogenase (Acinetobacter baylyi (strain ATCC 33305 / BD413 / ADP1)).